The primary structure comprises 209 residues: Uracil phosphoribosyltransferase (209 aa).

5-phospho-alpha-D-ribose 1-diphosphate is bound by residues Arg79, Arg104, and 131–139 (DPMLATGAS). Uracil-binding positions include Ile194 and 199–201 (GDA). A 5-phospho-alpha-D-ribose 1-diphosphate-binding site is contributed by Asp200.

It belongs to the UPRTase family. Requires Mg(2+) as cofactor.

The catalysed reaction is UMP + diphosphate = 5-phospho-alpha-D-ribose 1-diphosphate + uracil. The protein operates within pyrimidine metabolism; UMP biosynthesis via salvage pathway; UMP from uracil: step 1/1. With respect to regulation, allosterically activated by GTP. In terms of biological role, catalyzes the conversion of uracil and 5-phospho-alpha-D-ribose 1-diphosphate (PRPP) to UMP and diphosphate. This chain is Uracil phosphoribosyltransferase, found in Staphylococcus epidermidis (strain ATCC 35984 / DSM 28319 / BCRC 17069 / CCUG 31568 / BM 3577 / RP62A).